Consider the following 221-residue polypeptide: Probable septum site-determining protein MinC (221 aa).

This sequence belongs to the MinC family. In terms of assembly, interacts with MinD and FtsZ.

Cell division inhibitor that blocks the formation of polar Z ring septums. Rapidly oscillates between the poles of the cell to destabilize FtsZ filaments that have formed before they mature into polar Z rings. Prevents FtsZ polymerization. The polypeptide is Probable septum site-determining protein MinC (Aliivibrio salmonicida (strain LFI1238) (Vibrio salmonicida (strain LFI1238))).